We begin with the raw amino-acid sequence, 359 residues long: tRNA-specific 2-thiouridylase MnmA (359 aa).

ATP contacts are provided by residues 7 to 14 and Met33; that span reads AMSGGVDS. The active-site Nucleophile is Cys101. Residues Cys101 and Cys198 are joined by a disulfide bond. Position 125 (Gly125) interacts with ATP. Residues 148-150 form an interaction with tRNA region; it reads KDQ. Cys198 serves as the catalytic Cysteine persulfide intermediate.

It belongs to the MnmA/TRMU family.

The protein resides in the cytoplasm. It carries out the reaction S-sulfanyl-L-cysteinyl-[protein] + uridine(34) in tRNA + AH2 + ATP = 2-thiouridine(34) in tRNA + L-cysteinyl-[protein] + A + AMP + diphosphate + H(+). Its function is as follows. Catalyzes the 2-thiolation of uridine at the wobble position (U34) of tRNA, leading to the formation of s(2)U34. This is tRNA-specific 2-thiouridylase MnmA from Chloroflexus aurantiacus (strain ATCC 29366 / DSM 635 / J-10-fl).